Consider the following 855-residue polypeptide: Inactive rhomboid protein 1 (855 aa).

Residues 1–36 (MSEARRDSTSSLQRKKPPWLKLDIPSAVPPTAEEPS) are disordered. Topologically, residues 1–411 (MSEARRDSTS…HRPFFTYWLT (411 aa)) are cytoplasmic. A phosphoserine mark is found at Ser76 and Ser176. Thr180 and Thr183 each carry phosphothreonine. Ser390 is subject to Phosphoserine. Residues 412–432 (FVHSLVTILAVCIYGIAPVGF) form a helical membrane-spanning segment. Over 433–655 (SQHETVDSVL…NPEVPDQFYR (223 aa)) the chain is Lumenal. An N-linked (GlcNAc...) asparagine glycan is attached at Asn583. A helical transmembrane segment spans residues 656–676 (LWLSLFLHAGILHCLVSICFQ). The Cytoplasmic portion of the chain corresponds to 677 to 691 (MTVLRDLEKLAGWHR). The helical transmembrane segment at 692–712 (IAIIYLLSGVTGNLASAIFLP) threads the bilayer. At 713-714 (YR) the chain is on the lumenal side. The helical transmembrane segment at 715–735 (AEVGPAGSQFGILACLFVELF) threads the bilayer. Topologically, residues 736-746 (QSWQILARPWR) are cytoplasmic. The helical transmembrane segment at 747–767 (AFFKLLAVVLFLFTFGLLPWI) threads the bilayer. Over 768–772 (DNFAH) the chain is Lumenal. The helical transmembrane segment at 773–793 (ISGFISGLFLSFAFLPYISFG) threads the bilayer. Residues 794–803 (KFDLYRKRCQ) lie on the Cytoplasmic side of the membrane. The chain crosses the membrane as a helical span at residues 804–824 (IIIFQVVFLGLLAGLVVLFYF). Topologically, residues 825-855 (YPVRCEWCEFLTCIPFTDKFCEKYELDAQLH) are lumenal.

This sequence belongs to the peptidase S54 family. Homodimer, or homooligomer. Interacts with TGFA and HBEGF. Interacts with EGF; may retain EGF in the endoplasmic reticulum and regulates its degradation through the endoplasmic reticulum-associated degradation (ERAD). Interacts (via cytoplasmic N-terminus) with FRMD8/iTAP; this interaction leads to mutual protein stabilization. Interacts with ADAM17/TACE.

It localises to the endoplasmic reticulum membrane. The protein resides in the golgi apparatus membrane. Regulates ADAM17 protease, a sheddase of the epidermal growth factor (EGF) receptor ligands and TNF, thereby plays a role in sleep, cell survival, proliferation, migration and inflammation. Does not exhibit any protease activity on its own. This chain is Inactive rhomboid protein 1 (RHBDF1), found in Papio anubis (Olive baboon).